A 245-amino-acid polypeptide reads, in one-letter code: Leucyl/phenylalanyl-tRNA--protein transferase (245 aa).

Belongs to the L/F-transferase family.

It is found in the cytoplasm. It catalyses the reaction N-terminal L-lysyl-[protein] + L-leucyl-tRNA(Leu) = N-terminal L-leucyl-L-lysyl-[protein] + tRNA(Leu) + H(+). The catalysed reaction is N-terminal L-arginyl-[protein] + L-leucyl-tRNA(Leu) = N-terminal L-leucyl-L-arginyl-[protein] + tRNA(Leu) + H(+). It carries out the reaction L-phenylalanyl-tRNA(Phe) + an N-terminal L-alpha-aminoacyl-[protein] = an N-terminal L-phenylalanyl-L-alpha-aminoacyl-[protein] + tRNA(Phe). Functions in the N-end rule pathway of protein degradation where it conjugates Leu, Phe and, less efficiently, Met from aminoacyl-tRNAs to the N-termini of proteins containing an N-terminal arginine or lysine. The sequence is that of Leucyl/phenylalanyl-tRNA--protein transferase from Paraburkholderia xenovorans (strain LB400).